Reading from the N-terminus, the 314-residue chain is Putative methylthioribose-1-phosphate isomerase (314 aa).

Substrate contacts are provided by residues 45 to 47 (RGA), Arg-79, and Gln-177. The active-site Proton donor is the Asp-218. 227-228 (NK) provides a ligand contact to substrate.

Belongs to the eIF-2B alpha/beta/delta subunits family. MtnA subfamily.

The catalysed reaction is 5-(methylsulfanyl)-alpha-D-ribose 1-phosphate = 5-(methylsulfanyl)-D-ribulose 1-phosphate. Its function is as follows. Catalyzes the interconversion of methylthioribose-1-phosphate (MTR-1-P) into methylthioribulose-1-phosphate (MTRu-1-P). This is Putative methylthioribose-1-phosphate isomerase from Methanosphaera stadtmanae (strain ATCC 43021 / DSM 3091 / JCM 11832 / MCB-3).